A 306-amino-acid polypeptide reads, in one-letter code: MPFLELTLPCTRATQPRFENALEDVGALAVTMLDAHAGTINERAILEPGVGEVRLWEETELTALFDGDSDPLMLLAALEAFDPSLDTRHATFRSVEDSAWERAWIDQFKPMRFGARTFIVPWNQDLPEEANTPDAAVVRLDPGLAFGSGTHQTTALCLRWLDALAGEGQLQGCSVLDFGCGSGILALAALKLGAANAVGVDYDPQALLATAENAERNAMEAQMQVYLPQDEPVQTYPVVLANILATALDALAETLAARVAPGGRIALSGIMQGQEQDLVQRYTPWFEHLHCEYDAEWVRIDGVRRH.

S-adenosyl-L-methionine contacts are provided by Thr-154, Gly-179, Asp-201, and Asn-242.

This sequence belongs to the methyltransferase superfamily. PrmA family.

The protein localises to the cytoplasm. The enzyme catalyses L-lysyl-[protein] + 3 S-adenosyl-L-methionine = N(6),N(6),N(6)-trimethyl-L-lysyl-[protein] + 3 S-adenosyl-L-homocysteine + 3 H(+). In terms of biological role, methylates ribosomal protein L11. This Xanthomonas campestris pv. campestris (strain 8004) protein is Ribosomal protein L11 methyltransferase.